We begin with the raw amino-acid sequence, 388 residues long: D-xylose dehydrogenase (388 aa).

This sequence belongs to the Gfo/Idh/MocA family. Homotetramer. Zn(2+) is required as a cofactor.

It catalyses the reaction D-xylose + NADP(+) = D-xylono-1,5-lactone + NADPH + H(+). It carries out the reaction D-xylose + NAD(+) = D-xylono-1,5-lactone + NADH + H(+). The protein operates within carbohydrate metabolism; D-xylose degradation. Catalyzes the NADP(+)-dependent oxidation of D-xylose. Is able to use both NADP(+) and NAD(+); however, the enzyme shows a very strong preference for NADP(+). Is likely involved in the first step of the oxidative D-xylose degradation pathway. The polypeptide is D-xylose dehydrogenase (xdh) (Paenarthrobacter nicotinovorans (Arthrobacter nicotinovorans)).